Reading from the N-terminus, the 281-residue chain is Putative phosphatase/phosphodiesterase MPN_349 (281 aa).

Positions 12, 43, 44, and 71 each coordinate Fe cation. The active-site Proton donor is His-72. 3 residues coordinate Fe cation: His-158, His-183, and His-185.

Belongs to the YmdB-like family. Fe(3+) is required as a cofactor.

The protein is Putative phosphatase/phosphodiesterase MPN_349 of Mycoplasma pneumoniae (strain ATCC 29342 / M129 / Subtype 1) (Mycoplasmoides pneumoniae).